The following is a 500-amino-acid chain: Cytochrome c-552 (500 aa).

An N-terminal signal peptide occupies residues 1-24; sequence MKFLIKSLAVATISILGCLQTALA. Heme c is bound by residues His102, Cys130, Cys133, Lys134, Cys168, Cys171, His172, Cys217, Cys220, and His221. Glu223, Tyr224, Lys268, and Gln270 together coordinate Ca(2+). Residue Tyr224 participates in substrate binding. His271 lines the substrate pocket. Residues His282, Cys289, Cys292, His293, His308, Cys321, Cys324, His325, and His400 each contribute to the heme c site. Positions 477–500 are disordered; that stretch reads ARAKGLLPAEEADKPVAAPKAEAK.

This sequence belongs to the cytochrome c-552 family. Ca(2+) serves as cofactor. The cofactor is heme c.

Its subcellular location is the periplasm. It catalyses the reaction 6 Fe(III)-[cytochrome c] + NH4(+) + 2 H2O = 6 Fe(II)-[cytochrome c] + nitrite + 8 H(+). It functions in the pathway nitrogen metabolism; nitrate reduction (assimilation). Functionally, catalyzes the reduction of nitrite to ammonia, consuming six electrons in the process. In Mannheimia haemolytica (Pasteurella haemolytica), this protein is Cytochrome c-552.